We begin with the raw amino-acid sequence, 65 residues long: Conotoxin Cal1.5 (65 aa).

Positions 1–18 (MRCLPVFIILLLLASTAA) are cleaved as a signal peptide. The propeptide occupies 19 to 49 (VDVAGSKLKRRLERKPYQGSQAYVKKTAFGL). 2 disulfide bridges follow: cysteine 52–cysteine 62 and cysteine 53–cysteine 59. At proline 61 the chain carries 4-hydroxyproline.

This sequence belongs to the conotoxin T superfamily. As to expression, expressed by the venom duct.

The protein resides in the secreted. Probable neurotoxin with unknown target. Possibly targets ion channels. The protein is Conotoxin Cal1.5 of Californiconus californicus (California cone).